We begin with the raw amino-acid sequence, 188 residues long: Kininogen (188 aa).

N-linked (GlcNAc...) asparagine glycosylation is found at asparagine 36, asparagine 150, and asparagine 182.

Bradykinin is released from kininogen by kallikrein. Post-translationally, N-glycosylated. Contains O-acetylated sialic acids as terminal elements on biantennary and triantennary N-glycans.

In terms of biological role, inhibits papain and ficin (cysteine proteinases) but not trypsin (a serine proteinase). This chain is Kininogen, found in Anarhichas minor (Arctic spotted wolffish).